The primary structure comprises 890 residues: Serine/threonine-protein kinase D3 (890 aa).

Residues Ser6, Ser27, Ser37, Ser41, and Ser44 each carry the phosphoserine modification. Residues 154–204 form a Phorbol-ester/DAG-type 1 zinc finger; that stretch reads PHTLYVHSYKAPTFCDYCGEMLWGLVRQGLKCEGCGLNYHKRCAFKIPNNC. A phosphoserine mark is found at Ser213 and Ser216. Residues 271-321 form a Phorbol-ester/DAG-type 2 zinc finger; sequence PHTFAVHSYTRPTICQYCKRLLKGLFRQGMQCKDCKFNCHKRCASKVPRDC. The tract at residues 332 to 371 is disordered; sequence SSLGTDTDIPMDIDNNDINSDSSRGLDDTEEPSPPEDKMF. Phosphoserine is present on residues Ser364, Ser391, and Ser395. Positions 416–532 constitute a PH domain; that stretch reads TMVKEGWMVH…WEKAIRQALM (117 aa). At Tyr426 the chain carries Phosphotyrosine. Ser442 is modified (phosphoserine). At Tyr457 the chain carries Phosphotyrosine. Position 535 is a phosphothreonine (Thr535). The residue at position 539 (Ser539) is a Phosphoserine. A Protein kinase domain is found at 576-832; sequence IFADEVLGSG…VDKSLSHPWL (257 aa). ATP contacts are provided by residues 582-590 and Lys605; that span reads LGSGQFGIV. Asp699 (proton acceptor) is an active-site residue. Ser731 is modified (phosphoserine; by PKC). The residue at position 735 (Ser735) is a Phosphoserine; by autocatalysis. Tyr742 carries the phosphotyrosine modification.

This sequence belongs to the protein kinase superfamily. CAMK Ser/Thr protein kinase family. PKD subfamily. Mg(2+) serves as cofactor. As to expression, ubiquitous.

The protein resides in the cytoplasm. It localises to the membrane. It carries out the reaction L-seryl-[protein] + ATP = O-phospho-L-seryl-[protein] + ADP + H(+). The catalysed reaction is L-threonyl-[protein] + ATP = O-phospho-L-threonyl-[protein] + ADP + H(+). With respect to regulation, activated by DAG and phorbol esters. Phorbol-ester/DAG-type domains 1 and 2 bind both DAG and phorbol ester with high affinity and mediate translocation to the cell membrane. Autophosphorylation of Ser-735 and phosphorylation of Ser-731 by PKC relieves auto-inhibition by the PH domain. Its function is as follows. Converts transient diacylglycerol (DAG) signals into prolonged physiological effects, downstream of PKC. Involved in resistance to oxidative stress. The protein is Serine/threonine-protein kinase D3 (PRKD3) of Homo sapiens (Human).